We begin with the raw amino-acid sequence, 351 residues long: Histidinol-phosphate aminotransferase 1 (351 aa).

The residue at position 210 (lysine 210) is an N6-(pyridoxal phosphate)lysine.

This sequence belongs to the class-II pyridoxal-phosphate-dependent aminotransferase family. Histidinol-phosphate aminotransferase subfamily. As to quaternary structure, homodimer. Requires pyridoxal 5'-phosphate as cofactor.

The catalysed reaction is L-histidinol phosphate + 2-oxoglutarate = 3-(imidazol-4-yl)-2-oxopropyl phosphate + L-glutamate. The protein operates within amino-acid biosynthesis; L-histidine biosynthesis; L-histidine from 5-phospho-alpha-D-ribose 1-diphosphate: step 7/9. The chain is Histidinol-phosphate aminotransferase 1 (hisC1) from Pseudomonas aeruginosa (strain ATCC 15692 / DSM 22644 / CIP 104116 / JCM 14847 / LMG 12228 / 1C / PRS 101 / PAO1).